The sequence spans 150 residues: Arginine repressor (150 aa).

Belongs to the ArgR family.

The protein localises to the cytoplasm. Its pathway is amino-acid biosynthesis; L-arginine biosynthesis [regulation]. Its function is as follows. Regulates arginine biosynthesis genes. The protein is Arginine repressor of Clostridium botulinum (strain Okra / Type B1).